Consider the following 293-residue polypeptide: Diaminopimelate epimerase (293 aa).

Substrate-binding residues include N17, Q47, and N67. The active-site Proton donor is C76. Substrate-binding positions include 77 to 78 (GN), N164, N197, and 215 to 216 (ER). The Proton acceptor role is filled by C224. 225–226 (GS) contacts substrate.

It belongs to the diaminopimelate epimerase family. In terms of assembly, homodimer.

The protein resides in the cytoplasm. The enzyme catalyses (2S,6S)-2,6-diaminopimelate = meso-2,6-diaminopimelate. Its pathway is amino-acid biosynthesis; L-lysine biosynthesis via DAP pathway; DL-2,6-diaminopimelate from LL-2,6-diaminopimelate: step 1/1. Catalyzes the stereoinversion of LL-2,6-diaminopimelate (L,L-DAP) to meso-diaminopimelate (meso-DAP), a precursor of L-lysine and an essential component of the bacterial peptidoglycan. This is Diaminopimelate epimerase from Rhodopseudomonas palustris (strain TIE-1).